A 218-amino-acid chain; its full sequence is 5-oxoprolinase subunit B (218 aa).

The protein belongs to the PxpB family. As to quaternary structure, forms a complex composed of PxpA, PxpB and PxpC.

The enzyme catalyses 5-oxo-L-proline + ATP + 2 H2O = L-glutamate + ADP + phosphate + H(+). Its function is as follows. Catalyzes the cleavage of 5-oxoproline to form L-glutamate coupled to the hydrolysis of ATP to ADP and inorganic phosphate. The chain is 5-oxoprolinase subunit B from Escherichia coli O157:H7.